Reading from the N-terminus, the 1046-residue chain is Phospholipase D zeta 2 (1046 aa).

The PX domain occupies 45 to 205 (PKAAIVSVSR…KEVCKFLEVS (161 aa)). One can recognise a PH domain in the interval 215 to 343 (SKMKEGYVTV…WVKAVDEAGC (129 aa)). The region spanning 472–499 (YLWSHHEKIVIVDYQVCFIGGLDLCFGR) is the PLD phosphodiesterase 1 domain. Catalysis depends on residues H477, K479, and D484. The span at 653–667 (GRGDLKLDSGARQDP) shows a compositional bias: basic and acidic residues. The disordered stretch occupies residues 653 to 677 (GRGDLKLDSGARQDPGETSEESDLD). Positions 847–874 (SQIYVHSKLMIVDDRIAVIGSSNINDRS) constitute a PLD phosphodiesterase 2 domain. Catalysis depends on residues H852, K854, and D859.

Belongs to the phospholipase D family. PXPH-PLD subfamily. Does not require Ca(2+) or any other cation for activity. is required as a cofactor. As to expression, expressed in seedlings, roots, leaves, stems and flowers. Highest expression in roots. Detected only in the meristematic regions up to 4 days after germination and then at later stages in all tissues.

It catalyses the reaction a 1,2-diacyl-sn-glycero-3-phosphocholine + H2O = a 1,2-diacyl-sn-glycero-3-phosphate + choline + H(+). Hydrolyzes glycerol-phospholipids at the terminal phosphodiesteric bond to generate phosphatidic acids (PA). Phosphatidylcholine-selective. Regulates vesicle trafficking and auxin responses. Required for the normal cycling of PIN-2 containing vesicles. Contributes to the supply of inorganic phosphorus for cell metabolism and diacylglycerol moieties for galactolipid synthesis in phosphorus-starved roots. Involved in root elongation during phosphate limitation. This is Phospholipase D zeta 2 from Arabidopsis thaliana (Mouse-ear cress).